A 311-amino-acid chain; its full sequence is Acetyl-coenzyme A carboxylase carboxyl transferase subunit alpha (311 aa).

The 251-residue stretch at 36 to 286 folds into the CoA carboxyltransferase C-terminal domain; the sequence is KLEKEVEKTF…KEYFIKSLAE (251 aa).

This sequence belongs to the AccA family. As to quaternary structure, acetyl-CoA carboxylase is a heterohexamer composed of biotin carboxyl carrier protein (AccB), biotin carboxylase (AccC) and two subunits each of ACCase subunit alpha (AccA) and ACCase subunit beta (AccD).

Its subcellular location is the cytoplasm. The enzyme catalyses N(6)-carboxybiotinyl-L-lysyl-[protein] + acetyl-CoA = N(6)-biotinyl-L-lysyl-[protein] + malonyl-CoA. Its pathway is lipid metabolism; malonyl-CoA biosynthesis; malonyl-CoA from acetyl-CoA: step 1/1. In terms of biological role, component of the acetyl coenzyme A carboxylase (ACC) complex. First, biotin carboxylase catalyzes the carboxylation of biotin on its carrier protein (BCCP) and then the CO(2) group is transferred by the carboxyltransferase to acetyl-CoA to form malonyl-CoA. The protein is Acetyl-coenzyme A carboxylase carboxyl transferase subunit alpha of Aliarcobacter butzleri (strain RM4018) (Arcobacter butzleri).